The primary structure comprises 211 residues: MCPGNWLWASMTFMARFSRSSSRSPVRTRGSLEEMPSVHHPFLNVFELERLLYTGKTACNHADEVWPGLYLGDQDMANNRRELRRLGITHVLNASHSRWRGTPEAYEGLGIRYLGVEAHDSPAFDMSVHFQTAADFIHRALSQPGGKILVHCAVGVSRSATLVLAYLMLYHHFTLVEAIKKVKDHRGIIPNRGFLRQLLALDRRLRQGLEA.

Residues 60 to 207 (NHADEVWPGL…LLALDRRLRQ (148 aa)) form the Tyrosine-protein phosphatase domain. The active-site Phosphocysteine intermediate is C152.

It belongs to the protein-tyrosine phosphatase family. Non-receptor class dual specificity subfamily. Interacts with HSF4.

Its subcellular location is the cytoplasm. It is found in the nucleus. The protein resides in the golgi apparatus. It carries out the reaction O-phospho-L-tyrosyl-[protein] + H2O = L-tyrosyl-[protein] + phosphate. The catalysed reaction is O-phospho-L-seryl-[protein] + H2O = L-seryl-[protein] + phosphate. The enzyme catalyses O-phospho-L-threonyl-[protein] + H2O = L-threonyl-[protein] + phosphate. In terms of biological role, inactivates MAPK1 and MAPK3 which leads to dephosphorylation of heat shock factor protein 4 and a reduction in its DNA-binding activity. The polypeptide is Dual specificity protein phosphatase 26 (Dusp26) (Rattus norvegicus (Rat)).